Consider the following 189-residue polypeptide: UPF0301 protein CAB604 (189 aa).

This sequence belongs to the UPF0301 (AlgH) family.

In Chlamydia abortus (strain DSM 27085 / S26/3) (Chlamydophila abortus), this protein is UPF0301 protein CAB604.